Here is a 414-residue protein sequence, read N- to C-terminus: Serine hydroxymethyltransferase (414 aa).

(6S)-5,6,7,8-tetrahydrofolate is bound by residues Leu117 and 121 to 123; that span reads GHL. Lys226 is subject to N6-(pyridoxal phosphate)lysine. 349–351 is a binding site for (6S)-5,6,7,8-tetrahydrofolate; sequence SPF.

Belongs to the SHMT family. In terms of assembly, homodimer. It depends on pyridoxal 5'-phosphate as a cofactor.

The protein localises to the cytoplasm. It carries out the reaction (6R)-5,10-methylene-5,6,7,8-tetrahydrofolate + glycine + H2O = (6S)-5,6,7,8-tetrahydrofolate + L-serine. It functions in the pathway one-carbon metabolism; tetrahydrofolate interconversion. It participates in amino-acid biosynthesis; glycine biosynthesis; glycine from L-serine: step 1/1. Its function is as follows. Catalyzes the reversible interconversion of serine and glycine with tetrahydrofolate (THF) serving as the one-carbon carrier. This reaction serves as the major source of one-carbon groups required for the biosynthesis of purines, thymidylate, methionine, and other important biomolecules. Also exhibits THF-independent aldolase activity toward beta-hydroxyamino acids, producing glycine and aldehydes, via a retro-aldol mechanism. The protein is Serine hydroxymethyltransferase of Desulfovibrio desulfuricans (strain ATCC 27774 / DSM 6949 / MB).